Here is a 381-residue protein sequence, read N- to C-terminus: L-lactate dehydrogenase A-like 6B (381 aa).

NAD(+) is bound by residues 101-106 (DLDEDK) and arginine 148. The substrate site is built by arginine 155, asparagine 187, and arginine 218. Asparagine 187 is a binding site for NAD(+). Histidine 242 serves as the catalytic Proton acceptor. Substrate is bound at residue threonine 297.

This sequence belongs to the LDH/MDH superfamily. LDH family. In terms of tissue distribution, testis specific.

It catalyses the reaction (S)-lactate + NAD(+) = pyruvate + NADH + H(+). Its pathway is fermentation; pyruvate fermentation to lactate; (S)-lactate from pyruvate: step 1/1. This Homo sapiens (Human) protein is L-lactate dehydrogenase A-like 6B (LDHAL6B).